Here is a 278-residue protein sequence, read N- to C-terminus: Thioredoxin-related transmembrane protein 1 (278 aa).

A signal peptide spans 1–26; sequence MAHLGRLMVPLAALVLLLWAVPGAHG. Residues 27 to 132 form the Thioredoxin domain; it reads RRNNVRVLTD…FINFVSDKEW (106 aa). The Extracellular segment spans residues 27 to 181; sequence RRNNVRVLTD…DLGIPAWGSY (155 aa). Active-site nucleophile residues include C56 and C59. Cysteines 56 and 59 form a disulfide. A helical transmembrane segment spans residues 182–202; that stretch reads LVFAFATVLSGLLLGLCMIFV. Residues 203-278 lie on the Cytoplasmic side of the membrane; that stretch reads ADCLCPSKRR…VGLPSATDTS (76 aa). 2 S-palmitoyl cysteine lipidation sites follow: C205 and C207. Positions 217–226 are enriched in polar residues; it reads QYAKKTSPEF. A disordered region spans residues 217 to 278; it reads QYAKKTSPEF…VGLPSATDTS (62 aa). A compositionally biased stretch (acidic residues) spans 235-251; that stretch reads EEQEADEEDVSEEEAED. Phosphoserine is present on residues S245 and S278.

In terms of assembly, interacts with ATP2A2. In terms of processing, palmitoylated; palmitoylation is required for localization to mitochondria-associated endoplasmic reticulum membrane (MAM).

The protein localises to the endoplasmic reticulum membrane. It localises to the mitochondrion membrane. The protein resides in the secreted. It catalyses the reaction Catalyzes the rearrangement of -S-S- bonds in proteins.. Functionally, thiredoxin domain-containing protein that participates in various redox reactions through the reversible oxidation of its active center dithiol to a disulfide and catalyze dithiol-disulfide exchange reactions. Acts as a key inhibitor of the alternative triglyceride biosynthesis pathway by inhibiting the activity of TMEM68/DIESL at the endoplasmic reticulum, thereby restricting accumulation of triacylglycerol. The alternative triglyceride biosynthesis pathway mediates formation of triacylglycerol from diacylglycerol and membrane phospholipids. Acts as a protein disulfide isomerase by catalyzing formation or reduction of disulfide bonds. Specifically mediates formation of disulfide bonds of transmembrane proteins at the endoplasmic reticulum membrane. Involved in ER-associated degradation (ERAD) via its protein disulfide isomerase activity by acting on folding-defective polypeptides at the endoplasmic reticulum membrane. Acts as a negative regulator of platelet aggregation following secretion in the extracellular space. Acts as a regulator of endoplasmic reticulum-mitochondria contact sites via its ability to regulate redox signals. Regulates endoplasmic reticulum-mitochondria Ca(2+) flux. This chain is Thioredoxin-related transmembrane protein 1, found in Mus musculus (Mouse).